The chain runs to 609 residues: Major facilitator superfamily domain-containing protein 6-like protein A (609 aa).

2 consecutive transmembrane segments (helical) span residues 41–61 (LGLG…VHLL) and 78–98 (FFIM…AYYP). The disordered stretch occupies residues 201–241 (SGKAQKVMSSKSAASNSKQRSSLNNHTSPYATHPNVSHHPS). A compositionally biased stretch (polar residues) spans 207 to 230 (VMSSKSAASNSKQRSSLNNHTSPY). The next 9 helical transmembrane spans lie at 265 to 285 (IFLI…PLEW), 307 to 327 (LWIW…FLVD), 340 to 360 (VFFH…LSTL), 388 to 408 (IVLT…TQNF), 420 to 440 (ELYM…LYFF), 452 to 472 (WMVA…SFLW), 475 to 495 (WSVL…WWAI), 513 to 535 (LALR…GFII), and 541 to 561 (AVLY…FLLV).

It belongs to the major facilitator superfamily. MFSD6 family.

The protein resides in the membrane. The protein is Major facilitator superfamily domain-containing protein 6-like protein A (mfsd6l-a) of Xenopus laevis (African clawed frog).